The primary structure comprises 197 residues: Na(+)-translocating NADH-quinone reductase subunit E (197 aa).

The next 6 helical transmembrane spans lie at 11-31 (SVFI…FLAV), 35-55 (VSTA…SVPA), 76-96 (FLKF…LEMF), 108-128 (LGIY…VSFM), 139-159 (VVYG…LAGI), and 175-195 (LGIT…FSGI).

This sequence belongs to the NqrDE/RnfAE family. Composed of six subunits; NqrA, NqrB, NqrC, NqrD, NqrE and NqrF.

The protein localises to the cell inner membrane. The catalysed reaction is a ubiquinone + n Na(+)(in) + NADH + H(+) = a ubiquinol + n Na(+)(out) + NAD(+). Functionally, NQR complex catalyzes the reduction of ubiquinone-1 to ubiquinol by two successive reactions, coupled with the transport of Na(+) ions from the cytoplasm to the periplasm. NqrA to NqrE are probably involved in the second step, the conversion of ubisemiquinone to ubiquinol. The protein is Na(+)-translocating NADH-quinone reductase subunit E of Neisseria gonorrhoeae (strain ATCC 700825 / FA 1090).